The chain runs to 116 residues: Large ribosomal subunit protein uL18 (116 aa).

Belongs to the universal ribosomal protein uL18 family. Part of the 50S ribosomal subunit; part of the 5S rRNA/L5/L18/L25 subcomplex. Contacts the 5S and 23S rRNAs.

Functionally, this is one of the proteins that bind and probably mediate the attachment of the 5S RNA into the large ribosomal subunit, where it forms part of the central protuberance. This chain is Large ribosomal subunit protein uL18, found in Pseudomonas putida (strain GB-1).